A 271-amino-acid polypeptide reads, in one-letter code: GPN-loop GTPase 3 (271 aa).

G13–T18 serves as a coordination point for GTP. The short motif at G70 to N72 is the Gly-Pro-Asn (GPN)-loop; involved in dimer interface element. Position 173–176 (S173–D176) interacts with GTP.

The protein belongs to the GPN-loop GTPase family. In terms of assembly, heterodimers with GPN1 or GPN2. Binds to RNA polymerase II (RNAPII).

In terms of biological role, small GTPase required for proper nuclear import of RNA polymerase II and III (RNAPII and RNAPIII). May act at an RNAP assembly step prior to nuclear import. This chain is GPN-loop GTPase 3, found in Candida glabrata (strain ATCC 2001 / BCRC 20586 / JCM 3761 / NBRC 0622 / NRRL Y-65 / CBS 138) (Yeast).